We begin with the raw amino-acid sequence, 1105 residues long: KAT8 regulatory NSL complex subunit 1 (1105 aa).

At K104 the chain carries N6-acetyllysine. Disordered regions lie at residues 145 to 211 (GQTA…CTLP) and 225 to 263 (NNSTANKSSVNSMEQPALQGSSRLSPGTDSSSNLGGVKL). Residues 225–258 (NNSTANKSSVNSMEQPALQGSSRLSPGTDSSSNL) are compositionally biased toward polar residues. S249 carries the phosphoserine modification. Residue K262 forms a Glycyl lysine isopeptide (Lys-Gly) (interchain with G-Cter in SUMO2) linkage. S268 carries the phosphoserine modification. The stretch at 283-314 (RITALLRRQADIESRARRLQKRLQVVQAKQVE) forms a coiled coil. K331 is covalently cross-linked (Glycyl lysine isopeptide (Lys-Gly) (interchain with G-Cter in SUMO2)). Disordered regions lie at residues 399–426 (DSDVTDSSSGGESDIEEEELTRADPEQR) and 733–857 (TAKL…RRGE). Composition is skewed to basic and acidic residues over residues 741-753 (TRPDRTHRQHLDD) and 780-804 (DPNHSKMRLRDHSSERSEVLKHHTD). Residues 827–850 (STSSDSPAPASSSSQVTASTSQQP) are compositionally biased toward low complexity. The segment at 850 to 882 (PVRRRRGESSFDINNIVIPMSVAATTRVEKLQY) is required for activation of KAT8 histone acetyltransferase activity. The region spanning 884-1035 (EILTPSWREV…GLDEQSVQPW (152 aa)) is the PEHE domain. The segment at 910–928 (EDLSDAAFAALHAKCEEME) is interaction with KAT8 HAT domain. The tract at residues 938 to 1034 (VPPQRRGSRS…LGLDEQSVQP (97 aa)) is disordered. A compositionally biased stretch (polar residues) spans 955 to 965 (TTPQLGSANPS). Low complexity predominate over residues 975–988 (SSSHSLSEYSHGQS). A phosphoserine mark is found at S991 and S994. A Phosphothreonine modification is found at T1003. Residues 1008 to 1019 (DTPRHLASEDTR) show a composition bias toward basic and acidic residues. Residue S1045 is modified to Phosphoserine. The segment at 1058–1105 (ERAARCTRRTSGSKTGRETEAAPTSPPIVPLKSRHLVAAATAQRPTHR) is disordered.

Component of the NSL complex at least composed of MOF/KAT8, KANSL1, KANSL2, KANSL3, MCRS1, PHF20, OGT1/OGT, WDR5 and HCFC1. Interacts (via PEHE domain) with KAT8 (via HAT domain); the interaction is direct. Component of some MLL1/MLL complex, at least composed of the core components KMT2A/MLL1, ASH2L, HCFC1, WDR5 and RBBP5, as well as the facultative components BACC1, CHD8, E2F6, HSP70, INO80C, KANSL1, LAS1L, MAX, MCRS1, MGA, KAT8/MOF, PELP1, PHF20, PRP31, RING2, RUVB1/TIP49A, RUVB2/TIP49B, SENP3, TAF1, TAF4, TAF6, TAF7, TAF9 and TEX10. Expressed in the brain.

The protein localises to the nucleus. Its subcellular location is the chromosome. The protein resides in the centromere. It localises to the kinetochore. It is found in the mitochondrion. The protein localises to the cytoplasm. Its subcellular location is the cytoskeleton. The protein resides in the spindle pole. Non-catalytic component of the NSL histone acetyltransferase complex, a multiprotein complex that mediates histone H4 acetylation at 'Lys-5'- and 'Lys-8' (H4K5ac and H4K8ac) at transcription start sites and promotes transcription initiation. The NSL complex also acts as a regulator of gene expression in mitochondria. In addition to its role in transcription, KANSL1 also plays an essential role in spindle assembly during mitosis. Associates with microtubule ends and contributes to microtubule stability. The protein is KAT8 regulatory NSL complex subunit 1 (KANSL1) of Homo sapiens (Human).